A 431-amino-acid chain; its full sequence is Adenylosuccinate synthetase (431 aa).

GTP contacts are provided by residues 12–18 (GDEGKGK) and 40–42 (GHT). Catalysis depends on Asp-13, which acts as the Proton acceptor. Positions 13 and 40 each coordinate Mg(2+). IMP is bound by residues 13 to 16 (DEGK), 38 to 41 (NAGH), Thr-129, Arg-143, Gln-224, Thr-239, and Arg-303. His-41 acts as the Proton donor in catalysis. 299–305 (VTTGRAR) lines the substrate pocket. GTP-binding positions include Arg-305, 331 to 333 (KLD), and 413 to 415 (GVG).

This sequence belongs to the adenylosuccinate synthetase family. Homodimer. Requires Mg(2+) as cofactor.

Its subcellular location is the cytoplasm. It carries out the reaction IMP + L-aspartate + GTP = N(6)-(1,2-dicarboxyethyl)-AMP + GDP + phosphate + 2 H(+). The protein operates within purine metabolism; AMP biosynthesis via de novo pathway; AMP from IMP: step 1/2. Plays an important role in the de novo pathway of purine nucleotide biosynthesis. Catalyzes the first committed step in the biosynthesis of AMP from IMP. This is Adenylosuccinate synthetase from Mycolicibacterium vanbaalenii (strain DSM 7251 / JCM 13017 / BCRC 16820 / KCTC 9966 / NRRL B-24157 / PYR-1) (Mycobacterium vanbaalenii).